The following is a 425-amino-acid chain: UDP-N-acetylglucosamine 1-carboxyvinyltransferase (425 aa).

Phosphoenolpyruvate is bound at residue 22–23; sequence KN. Arg-98 provides a ligand contact to UDP-N-acetyl-alpha-D-glucosamine. Cys-122 (proton donor) is an active-site residue. 2-(S-cysteinyl)pyruvic acid O-phosphothioketal is present on Cys-122. UDP-N-acetyl-alpha-D-glucosamine contacts are provided by residues 127-131, Asp-313, and Ile-335; that span reads RPVDQ.

This sequence belongs to the EPSP synthase family. MurA subfamily.

It is found in the cytoplasm. The enzyme catalyses phosphoenolpyruvate + UDP-N-acetyl-alpha-D-glucosamine = UDP-N-acetyl-3-O-(1-carboxyvinyl)-alpha-D-glucosamine + phosphate. It participates in cell wall biogenesis; peptidoglycan biosynthesis. In terms of biological role, cell wall formation. Adds enolpyruvyl to UDP-N-acetylglucosamine. The polypeptide is UDP-N-acetylglucosamine 1-carboxyvinyltransferase (Xylella fastidiosa (strain M12)).